A 232-amino-acid chain; its full sequence is Vesicle transport through interaction with t-SNAREs homolog 1B (232 aa).

The residue at position 2 (A2) is an N-acetylalanine. Interaction with CLINT1 stretches follow at residues A2–E23 and A69–F73. The Cytoplasmic segment spans residues A2–L208. The stretch at A36–T98 forms a coiled coil. T103 bears the Phosphothreonine mark. R107 bears the Omega-N-methylarginine mark. S138 bears the Phosphoserine mark. Positions G160 to K201 form a coiled coil. Residues L209–F229 traverse the membrane as a helical; Anchor for type IV membrane protein segment. Residues R230–H232 lie on the Vesicular side of the membrane.

The protein belongs to the VTI1 family. Forms a SNARE complex with STX7, STX8 and VAMP8 which functions in the homotypic fusion of late endosomes. Component of the SNARE complex composed of STX7, STX8, VAMP7 and VIT1B that is required for heterotypic fusion of late endosomes with lysosomes. May interact with STX17. Interacts with CLINT1.

Its subcellular location is the early endosome membrane. It localises to the late endosome membrane. The protein resides in the lysosome membrane. The protein localises to the cytoplasmic granule. It is found in the recycling endosome membrane. In terms of biological role, V-SNARE that mediates vesicle transport pathways through interactions with t-SNAREs on the target membrane. These interactions are proposed to mediate aspects of the specificity of vesicle trafficking and to promote fusion of the lipid bilayers. The polypeptide is Vesicle transport through interaction with t-SNAREs homolog 1B (Vti1b) (Rattus norvegicus (Rat)).